A 703-amino-acid chain; its full sequence is Pinin (703 aa).

Alanine 2 is subject to N-acetylalanine. Residues 2-32 are a coiled coil; it reads AVAVRTLQEQLEKAKESLKNVDENIRKLTGR. A disordered region spans residues 46–148; the sequence is ALSGPGGGRG…ETPERPGPIF (103 aa). A Phosphoserine modification is found at serine 48. Arginine 54 carries the omega-N-methylarginine modification. A phosphoserine mark is found at serine 58, serine 66, serine 96, and serine 100. Residues 87 to 100 show a composition bias toward basic and acidic residues; sequence GGERRTRRESRQES. A Glycyl lysine isopeptide (Lys-Gly) (interchain with G-Cter in SUMO2) cross-link involves residue lysine 109. A phosphoserine mark is found at serine 114 and serine 115. Lysine 121 participates in a covalent cross-link: Glycyl lysine isopeptide (Lys-Gly) (interchain with G-Cter in SUMO2). Threonine 125 carries the phosphothreonine modification. Residues lysine 138 and lysine 157 each participate in a glycyl lysine isopeptide (Lys-Gly) (interchain with G-Cter in SUMO2) cross-link. Lysine 159 participates in a covalent cross-link: Glycyl lysine isopeptide (Lys-Gly) (interchain with G-Cter in SUMO1); alternate. Lysine 159 participates in a covalent cross-link: Glycyl lysine isopeptide (Lys-Gly) (interchain with G-Cter in SUMO2); alternate. Residues 165-236 adopt a coiled-coil conformation; that stretch reads ATERQKRRQE…HNAKIIKYIR (72 aa). The interval 223-285 is sufficient for PSAP complex assembly; the sequence is EWNEHNAKII…AEQINKMEAR (63 aa). Lysine 230 participates in a covalent cross-link: Glycyl lysine isopeptide (Lys-Gly) (interchain with G-Cter in SUMO2). Lysine 240 carries the N6-acetyllysine; alternate modification. Lysine 240 is modified (N6-succinyllysine; alternate). Glycyl lysine isopeptide (Lys-Gly) (interchain with G-Cter in SUMO2) cross-links involve residues lysine 281, lysine 306, and lysine 313. Disordered stretches follow at residues 284-314, 331-394, and 408-703; these read ARPR…EGKV, RVGT…EEVM, and AEQE…PGQL. 2 stretches are compositionally biased toward basic and acidic residues: residues 348–357 and 366–386; these read EIPIVHSDAE and KQEM…EKQQ. Serine 354 bears the Phosphoserine mark. A coiled-coil region spans residues 354-411; that stretch reads SDAEKEQEEEEQKQEMEVKMEEETEVRESEKQQDSQPEEVMDVLEMVESVKNVIAEQE. Residues lysine 366 and lysine 372 each participate in a glycyl lysine isopeptide (Lys-Gly) (interchain with G-Cter in SUMO2) cross-link. Phosphoserine is present on residues serine 382 and serine 388. Basic and acidic residues predominate over residues 417–433; it reads QVERVEPSENEASKELE. Phosphoserine occurs at positions 450 and 457. Positions 479 to 489 are enriched in low complexity; it reads PMAQPQAQSLP. Glycyl lysine isopeptide (Lys-Gly) (interchain with G-Cter in SUMO2) cross-links involve residues lysine 541 and lysine 549. Serine 565 carries the post-translational modification Phosphoserine. Lysine 566 is covalently cross-linked (Glycyl lysine isopeptide (Lys-Gly) (interchain with G-Cter in SUMO2)). Basic residues predominate over residues 572-588; the sequence is RSRSRGRARNRTSKSRS. A compositionally biased stretch (low complexity) spans 589–642; it reads RSSSSSSSSSSSTSSSSGSSSSSGSSSSRTSSSSSSTSGSSSRDSSSSTTSSSE. Residues 646 to 664 are compositionally biased toward basic residues; the sequence is RSRGRGHNRDRKHRRSVDR. Positions 665–676 are enriched in basic and acidic residues; sequence KRRDASGLERSH. A phosphoserine mark is found at serine 670 and serine 691.

It belongs to the pinin family. Found in a mRNA splicing-dependent exon junction complex (EJC). Found in a complex with SR proteins. Found in a mRNP complex with RNPS1. Component of the PSAP complex consisting of RNPS1, SAP18 and PNN. Interacts with PNISR, CTBP1, CTBP2, KRT8, KRT18, KRT19, PS1D/PNO40, PPIG, RNPS1, SFRS4 and SRRM2. Identified in the spliceosome C complex.

It localises to the nucleus speckle. The protein localises to the cell junction. Its subcellular location is the desmosome. Its function is as follows. Transcriptional activator binding to the E-box 1 core sequence of the E-cadherin promoter gene; the core-binding sequence is 5'CAGGTG-3'. Capable of reversing CTBP1-mediated transcription repression. Auxiliary component of the splicing-dependent multiprotein exon junction complex (EJC) deposited at splice junction on mRNAs. The EJC is a dynamic structure consisting of core proteins and several peripheral nuclear and cytoplasmic associated factors that join the complex only transiently either during EJC assembly or during subsequent mRNA metabolism. Participates in the regulation of alternative pre-mRNA splicing. Associates to spliced mRNA within 60 nt upstream of the 5'-splice sites. Component of the PSAP complex which binds RNA in a sequence-independent manner and is proposed to be recruited to the EJC prior to or during the splicing process and to regulate specific excision of introns in specific transcription subsets. Involved in the establishment and maintenance of epithelia cell-cell adhesion. In Bos taurus (Bovine), this protein is Pinin (PNN).